A 93-amino-acid polypeptide reads, in one-letter code: Acylphosphatase (93 aa).

The Acylphosphatase-like domain occupies 5–93 (CIIAWVHGRV…EELTGFRIRY (89 aa)). Residues Arg20 and Asn38 contribute to the active site.

This sequence belongs to the acylphosphatase family.

The catalysed reaction is an acyl phosphate + H2O = a carboxylate + phosphate + H(+). This chain is Acylphosphatase (acyP), found in Citrobacter koseri (strain ATCC BAA-895 / CDC 4225-83 / SGSC4696).